The sequence spans 437 residues: ATP-dependent protease ATPase subunit HslU (437 aa).

Residues V18, 60–65 (GCGKTE), D250, E315, and R387 each bind ATP.

It belongs to the ClpX chaperone family. HslU subfamily. A double ring-shaped homohexamer of HslV is capped on each side by a ring-shaped HslU homohexamer. The assembly of the HslU/HslV complex is dependent on binding of ATP.

It is found in the cytoplasm. Functionally, ATPase subunit of a proteasome-like degradation complex; this subunit has chaperone activity. The binding of ATP and its subsequent hydrolysis by HslU are essential for unfolding of protein substrates subsequently hydrolyzed by HslV. HslU recognizes the N-terminal part of its protein substrates and unfolds these before they are guided to HslV for hydrolysis. The sequence is that of ATP-dependent protease ATPase subunit HslU from Methylorubrum populi (strain ATCC BAA-705 / NCIMB 13946 / BJ001) (Methylobacterium populi).